Consider the following 674-residue polypeptide: PTS system glucose-specific EIIBCA component (674 aa).

One can recognise a PTS EIIB type-1 domain in the interval 1 to 89; that stretch reads MASKLTTTSQ…LKLDGMKHFA (89 aa). The Phosphocysteine intermediate; for EIIB activity role is filled by C28. One can recognise a PTS EIIC type-1 domain in the interval 117-476; sequence EFLSDTFRPI…DAERDEAKAQ (360 aa). 10 helical membrane-spanning segments follow: residues 126 to 146, 162 to 182, 193 to 213, 225 to 245, 260 to 280, 303 to 323, 344 to 364, 376 to 396, 409 to 429, and 442 to 462; these read ILWALLGASLIITLLVLADTF, YVFLHSMWRSVFYFLPIMVGA, WIGAAIPAALLTPEFLALGSA, VLNDYSGQVFPPLIAAIGLYW, MVFVPFFSLLIMIPATAFLLG, FILSIVIPLLYPFLVPLGLHW, PMGAWNFACFGLVTGVFLIAL, LGGMLAGLLGGISEPSLYGVL, GCLVGGIVMGIFDIKAYAFVF, and LGYTVGIAAAFFTSMLLVLFF. Positions 542–646 constitute a PTS EIIA type-1 domain; the sequence is DPIFAAGKLG…PLITPVVVSN (105 aa). H594 serves as the catalytic Tele-phosphohistidine intermediate; for EIIA activity.

It localises to the cell membrane. It carries out the reaction N(pros)-phospho-L-histidyl-[protein] + D-glucose(out) = D-glucose 6-phosphate(in) + L-histidyl-[protein]. The phosphoenolpyruvate-dependent sugar phosphotransferase system (sugar PTS), a major carbohydrate active transport system, catalyzes the phosphorylation of incoming sugar substrates concomitantly with their translocation across the cell membrane. This system is involved in glucose transport. In Corynebacterium glutamicum (Brevibacterium saccharolyticum), this protein is PTS system glucose-specific EIIBCA component (ptsG).